A 599-amino-acid polypeptide reads, in one-letter code: Elongation factor 4 (599 aa).

Positions 5–187 constitute a tr-type G domain; sequence SHIRNFSIIA…RLVTVIPAPE (183 aa). GTP is bound by residues 17–22 and 134–137; these read DHGKST and NKMD.

The protein belongs to the TRAFAC class translation factor GTPase superfamily. Classic translation factor GTPase family. LepA subfamily.

Its subcellular location is the cell inner membrane. It catalyses the reaction GTP + H2O = GDP + phosphate + H(+). In terms of biological role, required for accurate and efficient protein synthesis under certain stress conditions. May act as a fidelity factor of the translation reaction, by catalyzing a one-codon backward translocation of tRNAs on improperly translocated ribosomes. Back-translocation proceeds from a post-translocation (POST) complex to a pre-translocation (PRE) complex, thus giving elongation factor G a second chance to translocate the tRNAs correctly. Binds to ribosomes in a GTP-dependent manner. The polypeptide is Elongation factor 4 (Pseudomonas paraeruginosa (strain DSM 24068 / PA7) (Pseudomonas aeruginosa (strain PA7))).